A 336-amino-acid polypeptide reads, in one-letter code: Nucleoid-associated protein ECA2747 (336 aa).

A disordered region spans residues 317-336 (KGTPPNLRDQLQRRTSGGKQ).

It belongs to the YejK family.

It is found in the cytoplasm. The protein resides in the nucleoid. The chain is Nucleoid-associated protein ECA2747 from Pectobacterium atrosepticum (strain SCRI 1043 / ATCC BAA-672) (Erwinia carotovora subsp. atroseptica).